A 1405-amino-acid chain; its full sequence is Protein crumbs homolog 1 (1405 aa).

Residues 1-27 (MKLKRTAYLLFLYLSSSLLICIKNSFC) form the signal peptide. At 28 to 1339 (NKNNTRCLSG…RCELDLADDR (1312 aa)) the chain is on the extracellular side. The 38-residue stretch at 30 to 67 (NNTRCLSGPCQNNSTCKHFPQDNNCCLDTANNLDKDCE) folds into the EGF-like 1; atypical domain. Disulfide bonds link cysteine 34–cysteine 45, cysteine 39–cysteine 54, cysteine 55–cysteine 66, cysteine 73–cysteine 84, cysteine 78–cysteine 95, cysteine 97–cysteine 106, cysteine 113–cysteine 124, cysteine 118–cysteine 133, cysteine 135–cysteine 144, cysteine 151–cysteine 162, cysteine 156–cysteine 171, cysteine 173–cysteine 182, cysteine 189–cysteine 200, cysteine 194–cysteine 209, cysteine 211–cysteine 220, cysteine 227–cysteine 238, cysteine 232–cysteine 247, cysteine 249–cysteine 258, cysteine 265–cysteine 276, cysteine 270–cysteine 285, cysteine 287–cysteine 297, cysteine 304–cysteine 315, cysteine 309–cysteine 324, cysteine 326–cysteine 335, cysteine 342–cysteine 353, cysteine 347–cysteine 382, cysteine 384–cysteine 393, cysteine 400–cysteine 411, cysteine 405–cysteine 420, cysteine 422–cysteine 437, cysteine 444–cysteine 455, cysteine 449–cysteine 468, and cysteine 470–cysteine 479. N-linked (GlcNAc...) asparagine glycosylation is present at asparagine 41. EGF-like domains follow at residues 69 to 107 (LKDPCFSSPCQGIATCVKIPGEGNFLCQCPPGYSGLNCE) and 109 to 145 (ATNSCGGNLCQHGGTCRKDPEHPVCICPPGYAGRFCE). An EGF-like 4; calcium-binding domain is found at 147 to 183 (DHNECASSPCHNGAMCQDGINGYSCFCVPGYQGRHCD). An EGF-like 5; calcium-binding domain is found at 185–221 (EVDECVSDPCKNEAVCLNEIGRYTCVCPQEFSGVNCE). The EGF-like 6; calcium-binding domain occupies 223–259 (EIDECRSQPCLHGATCQDAPGGYSCDCAPGFLGEHCE). 5 EGF-like domains span residues 261-298 (SVNECESQPCLHGGLCVDGRNSYHCDCTGSGFTGMHCE), 300-336 (LIPLCWSKPCHNDATCEDTVDSYICHCRPGYTGALCE), 338-394 (DINE…IHCE), 396-438 (DVDE…ENCS), and 440-480 (ILLG…PLCE). The Laminin G-like 1 domain occupies 482-669 (VTTLSFGSNG…GLSSNVKAGC (188 aa)). N-linked (GlcNAc...) asparagine glycosylation is found at asparagine 560 and asparagine 656. 4 cysteine pairs are disulfide-bonded: cysteine 641-cysteine 669, cysteine 675-cysteine 686, cysteine 680-cysteine 695, and cysteine 697-cysteine 706. The 37-residue stretch at 671 to 707 (GKDWCESQPCQNRGRCINLWQGYQCECDRPYTGSNCL) folds into the EGF-like 12 domain. The region spanning 713 to 884 (GRFGQDDSTG…PILVNVTQGC (172 aa)) is the Laminin G-like 2 domain. 2 N-linked (GlcNAc...) asparagine glycosylation sites follow: asparagine 756 and asparagine 879. 6 disulfide bridges follow: cysteine 850/cysteine 884, cysteine 890/cysteine 901, cysteine 895/cysteine 910, cysteine 912/cysteine 921, cysteine 927/cysteine 938, and cysteine 932/cysteine 947. 2 EGF-like domains span residues 886–922 (GDNTCKSNPCHNGGVCHSLWDDFSCSCPTNTAGRACE) and 923–959 (QVQWCQLSPCPPTAECQLLPQGFECIANAVFSGLSRE). Residues 950 to 1136 (NAVFSGLSRE…VSTNMVLTGC (187 aa)) form the Laminin G-like 3 domain. 3 N-linked (GlcNAc...) asparagine glycosylation sites follow: asparagine 967, asparagine 974, and asparagine 999. Cystine bridges form between cysteine 1095-cysteine 1136, cysteine 1142-cysteine 1153, cysteine 1147-cysteine 1162, cysteine 1164-cysteine 1173, cysteine 1180-cysteine 1190, cysteine 1185-cysteine 1199, cysteine 1201-cysteine 1210, cysteine 1217-cysteine 1228, cysteine 1222-cysteine 1237, cysteine 1239-cysteine 1248, cysteine 1258-cysteine 1273, cysteine 1267-cysteine 1282, cysteine 1284-cysteine 1293, cysteine 1300-cysteine 1311, cysteine 1305-cysteine 1320, and cysteine 1322-cysteine 1331. The EGF-like 15 domain occupies 1138 to 1174 (PSNACHSSPCLHGGNCEDSYSSYRCACLSGWSGTHCE). The region spanning 1176–1211 (NIDECFSSPCIHGNCSDGVAAYHCRCEPGYTGVNCE) is the EGF-like 16; calcium-binding domain. An N-linked (GlcNAc...) asparagine glycan is attached at asparagine 1189. EGF-like domains follow at residues 1213-1249 (DVDNCKSHQCANGATCVPEAHGYSCLCFGNFTGRFCR) and 1254-1294 (PSTV…EWCE). Residues asparagine 1242 and asparagine 1264 are each glycosylated (N-linked (GlcNAc...) asparagine). The 37-residue stretch at 1296–1332 (DINECASDPCINGGLCRDLVNRFLCICDVAFAGERCE) folds into the EGF-like 19; calcium-binding domain. A helical transmembrane segment spans residues 1340-1360 (LLGIFTAVGSGTLALFFILLL). Over 1361–1405 (AGVASLIASNKRATQGTYSPSGQEKAGPRVEMWIRMPPPALERLI) the chain is Cytoplasmic.

It belongs to the Crumbs protein family. In terms of assembly, component of a complex composed of PALS1, CRB1 and EPB41L5. Within the complex, interacts (via intracellular domain) with PALS1 and EPB41L5 (via FERM domain). Forms a complex with MPP4 and PALS1. Interacts with MPDZ/MUPP1 and MPP4. Post-translationally, glycosylated. As to expression, expressed in the kidney, lung, stomach and testis. Expressed in the brain. Expressed in the retina of the eye. Expressed in the outer nuclear layer, photoreceptor layer and inner nuclear layer of the retina. Expressed in Mueller cell radial processes in the inner nuclear layer, in apical processes sclerad to the external limiting membrane, and in the subapical region, adjacent to the adherens junction of retinal photoreceptors. In the brain, expressed in the granular layer of the cerebellum, the hippocampal dentate gyrus, the olfactory bulbs, the subventricular region lining the telencephalic ventricles and the rostral migratory stream. Ubiquitously expressed.

It is found in the apical cell membrane. It localises to the secreted. The protein resides in the cell projection. Its subcellular location is the cilium. The protein localises to the photoreceptor outer segment. It is found in the photoreceptor inner segment. It localises to the cytoplasm. The protein resides in the cell junction. Its subcellular location is the focal adhesion. In terms of biological role, plays a role in photoreceptor morphogenesis in the retina. May maintain cell polarization and adhesion. Functionally, may play a role in epidermal tissue morphogenesis. May function in cell attachment for stratified epithelial organization. The sequence is that of Protein crumbs homolog 1 (Crb1) from Mus musculus (Mouse).